Reading from the N-terminus, the 404-residue chain is Argininosuccinate synthase (404 aa).

Position 9 to 17 (9 to 17 (AYSGGLDTS)) interacts with ATP. Tyr-86 provides a ligand contact to L-citrulline. Position 116 (Gly-116) interacts with ATP. 3 residues coordinate L-aspartate: Thr-118, Asn-122, and Asp-123. Residue Asn-122 coordinates L-citrulline. L-citrulline contacts are provided by Arg-126, Ser-174, Ser-183, Glu-259, and Tyr-271.

The protein belongs to the argininosuccinate synthase family. Type 1 subfamily. As to quaternary structure, homotetramer.

It localises to the cytoplasm. It catalyses the reaction L-citrulline + L-aspartate + ATP = 2-(N(omega)-L-arginino)succinate + AMP + diphosphate + H(+). It functions in the pathway amino-acid biosynthesis; L-arginine biosynthesis; L-arginine from L-ornithine and carbamoyl phosphate: step 2/3. This chain is Argininosuccinate synthase, found in Listeria welshimeri serovar 6b (strain ATCC 35897 / DSM 20650 / CCUG 15529 / CIP 8149 / NCTC 11857 / SLCC 5334 / V8).